The chain runs to 69 residues: MASVFSFLLMSAAGFPTLSTDSSIRSSRNALTLLRWICEAVSAAVPVSRPSANCVTYKAVISKFIARIA.

This is an uncharacterized protein from Treponema pallidum (strain Nichols).